Here is a 236-residue protein sequence, read N- to C-terminus: Adenosine 5'-phosphosulfate reductase (236 aa).

The [4Fe-4S] cluster site is built by C123, C124, C206, and C209. C232 acts as the Nucleophile; cysteine thiosulfonate intermediate in catalysis.

It belongs to the PAPS reductase family. CysH subfamily. [4Fe-4S] cluster serves as cofactor.

It localises to the cytoplasm. The catalysed reaction is [thioredoxin]-disulfide + sulfite + AMP + 2 H(+) = adenosine 5'-phosphosulfate + [thioredoxin]-dithiol. It participates in sulfur metabolism; hydrogen sulfide biosynthesis; sulfite from sulfate. In terms of biological role, catalyzes the formation of sulfite from adenosine 5'-phosphosulfate (APS) using thioredoxin as an electron donor. This chain is Adenosine 5'-phosphosulfate reductase, found in Streptomyces coelicolor (strain ATCC BAA-471 / A3(2) / M145).